Here is a 1216-residue protein sequence, read N- to C-terminus: Protein WWC3 (1216 aa).

The tract at residues 1 to 63 (MPWLSGGRRR…RESAELPLPA (63 aa)) is disordered. Pro residues predominate over residues 21–51 (EPPPSAQPQREPPPAPPAAVPTPPAPSAPPP). WW domains lie at 59 to 92 (LPLP…DPRD) and 106 to 139 (DELP…DPRE). Coiled-coil stretches lie at residues 164–250 (KEIY…TLQE) and 354–468 (DRVR…EATR). Disordered stretches follow at residues 487–508 (VSSG…SSRG), 546–612 (GRDA…ADSC), and 634–668 (DLPG…VGGT). Residues 570–598 (PQSLASLSSRSSLSSLSPPSSPLDTPFLP) show a composition bias toward low complexity. The C2 domain occupies 722 to 847 (SNGDPQIHVG…SLSEMQLRWH (126 aa)). Residues 885–936 (DAVTVLLARTTAQLQAVERELAEERAKLEYTEEEVLEMERKEEQAEAISERS) are a coiled coil. The segment at 1060-1079 (SPFVRNTLERRTLRYKQSCR) is interaction with PRKCZ. Positions 1091–1160 (LDLELDLQAS…RQTRQTKLDY (70 aa)) form a coiled coil.

Belongs to the WWC family. Forms homodimers and heterodimers with WWC1 and WWC2. Interacts with DLC1 and PRKCZ. Interacts (via WW domains) with LATS1 and LATS2.

It localises to the cytoplasm. The protein localises to the cytosol. In terms of biological role, regulator of the Hippo signaling pathway, also known as the Salvador-Warts-Hippo (SWH) pathway. Enhances phosphorylation of LATS1 and YAP1 and negatively regulates cell proliferation and organ growth due to a suppression of the transcriptional activity of YAP1, the major effector of the Hippo pathway. The protein is Protein WWC3 of Homo sapiens (Human).